The following is a 347-amino-acid chain: Phosphate acyltransferase (347 aa).

This sequence belongs to the PlsX family. Homodimer. Probably interacts with PlsY.

Its subcellular location is the cytoplasm. It carries out the reaction a fatty acyl-[ACP] + phosphate = an acyl phosphate + holo-[ACP]. It participates in lipid metabolism; phospholipid metabolism. In terms of biological role, catalyzes the reversible formation of acyl-phosphate (acyl-PO(4)) from acyl-[acyl-carrier-protein] (acyl-ACP). This enzyme utilizes acyl-ACP as fatty acyl donor, but not acyl-CoA. The sequence is that of Phosphate acyltransferase from Sinorhizobium medicae (strain WSM419) (Ensifer medicae).